Reading from the N-terminus, the 231-residue chain is Orotate phosphoribosyltransferase (231 aa).

K29 provides a ligand contact to 5-phospho-alpha-D-ribose 1-diphosphate. 37-38 (FF) serves as a coordination point for orotate. 5-phospho-alpha-D-ribose 1-diphosphate contacts are provided by residues 75–76 (YK), R107, K108, K111, H113, and 133–141 (DDVISRCTA). Residues S137 and R165 each contribute to the orotate site.

The protein belongs to the purine/pyrimidine phosphoribosyltransferase family. PyrE subfamily. As to quaternary structure, homodimer.

It carries out the reaction orotidine 5'-phosphate + diphosphate = orotate + 5-phospho-alpha-D-ribose 1-diphosphate. The protein operates within pyrimidine metabolism; UMP biosynthesis via de novo pathway; UMP from orotate: step 1/2. Functionally, catalyzes the transfer of a ribosyl phosphate group from 5-phosphoribose 1-diphosphate to orotate, leading to the formation of orotidine monophosphate (OMP). The protein is Orotate phosphoribosyltransferase (URA5) of Podospora anserina (Pleurage anserina).